The sequence spans 345 residues: Uroporphyrinogen decarboxylase (345 aa).

Substrate-binding positions include 23–27, Asp-73, Tyr-149, Thr-203, and His-319; that span reads RQAGR.

The protein belongs to the uroporphyrinogen decarboxylase family. Homodimer.

It is found in the cytoplasm. It catalyses the reaction uroporphyrinogen III + 4 H(+) = coproporphyrinogen III + 4 CO2. It participates in porphyrin-containing compound metabolism; protoporphyrin-IX biosynthesis; coproporphyrinogen-III from 5-aminolevulinate: step 4/4. Functionally, catalyzes the decarboxylation of four acetate groups of uroporphyrinogen-III to yield coproporphyrinogen-III. This Vesicomyosocius okutanii subsp. Calyptogena okutanii (strain HA) protein is Uroporphyrinogen decarboxylase.